The primary structure comprises 183 residues: Proton-transporting V-type ATPase complex assembly regulator TMEM9 (183 aa).

A signal peptide spans 1–20 (MKLLSLVAVVGCLLVPPAEA). 3 N-linked (GlcNAc...) asparagine glycosylation sites follow: Asn-21, Asn-38, and Asn-47. Residues 21–89 (NKSSEDIRCK…YEERSTTTIK (69 aa)) are Extracellular-facing. Residues 90–110 (VIIVIYLSVVGALLLYMAFLM) traverse the membrane as a helical segment. Over 111 to 183 (LVDPLIRKPD…TVFDRHKMLS (73 aa)) the chain is Cytoplasmic. Residues Ser-137 and Ser-144 each carry the phosphoserine modification.

The protein belongs to the TMEM9 family. In terms of assembly, interacts with the v-ATPase accessory protein ATP6AP2 and with the v-ATPase complex subunit ATP6V0D1; these interactions lead to the assembly of the v-ATPase complex. In terms of processing, N-glycosylated. As to expression, highly expressed in adrenal gland, thyroid gland, testis, ovary and prostate. Moderate expression in trachea, spinal cord, stomach, colon, small intestine and spleen. Low expression in bone marrow, lymph node, thymus and peripheral blood lymphocytes. Expression is detected in hematopoietic cell lines including those of myeloid, erythroid, B- and T-cell origin.

Its subcellular location is the lysosome membrane. It is found in the late endosome membrane. It localises to the endosome. The protein resides in the multivesicular body membrane. Functionally, transmembrane protein that binds to and facilitates the assembly of lysosomal proton-transporting V-type ATPase (v-ATPase), resulting in enhanced lysosomal acidification and trafficking. By bringing the v-ATPase accessory protein ATP6AP2 and the v-ATPase subunit ATP6V0D1 together, allows v-ATPase complex formation and activation. TMEM9-controlled vesicular acidification induces hyperactivation of Wnt/beta-catenin signaling, involved in development, tissue homeostasis and tissue regeneration, through lysosomal degradation of adenomatous polyposis coli/APC. In the liver, involved in hepatic regeneration. This Homo sapiens (Human) protein is Proton-transporting V-type ATPase complex assembly regulator TMEM9.